The chain runs to 456 residues: L-2-hydroxyglutarate dehydrogenase, mitochondrial (456 aa).

A mitochondrion-targeting transit peptide spans 1–20 (MLKTSFLLSKRNAVSLSRVL).

It belongs to the L2HGDH family. It depends on FAD as a cofactor.

The protein resides in the mitochondrion. The catalysed reaction is (S)-2-hydroxyglutarate + A = 2-oxoglutarate + AH2. This is L-2-hydroxyglutarate dehydrogenase, mitochondrial from Nematostella vectensis (Starlet sea anemone).